The chain runs to 142 residues: Biogenesis of lysosome-related organelles complex 1 subunit 2 (142 aa).

The interval 1–33 is disordered; sequence MAAAAEGVLATRSDEPARDDAAVETAEEAKEPA. Position 2 is an N-acetylalanine (Ala-2). Positions 12 to 33 are enriched in basic and acidic residues; that stretch reads RSDEPARDDAAVETAEEAKEPA. Residues 79 to 127 are a coiled coil; it reads EMKDIAINISRNLKDLNQKYAGLQPYLDQINVIEEQVAALEQAAYKLDA.

It belongs to the BLOC1S2 family. In terms of assembly, component of the biogenesis of lysosome-related organelles complex 1 (BLOC-1) composed of BLOC1S1, BLOC1S2, BLOC1S3, BLOC1S4, BLOC1S5, BLOC1S6, DTNBP1/BLOC1S7 and SNAPIN/BLOC1S8. Octamer composed of one copy each BLOC1S1, BLOC1S2, BLOC1S3, BLOC1S4, BLOC1S5, BLOC1S6, DTNBP1/BLOC1S7 and SNAPIN/BLOC1S8. Interacts directly with BLOC1S1, BLOC1S3, BLOC1S4, BLOC1S5 and SNAPIN. The BLOC-1 complex associates with the AP-3 protein complex and membrane protein cargos. Component of the BLOC-one-related complex (BORC) which is composed of BLOC1S1, BLOC1S2, BORCS5, BORCS6, BORCS7, BORCS8, KXD1 and SNAPIN. Interacts with gamma-tubulin. Interacts with IFT57. Isoform 1 and isoform 2 are widely expressed. Expressed in various malignant tumor tissues (at protein level).

It localises to the cytoplasm. The protein localises to the cytoskeleton. It is found in the microtubule organizing center. Its subcellular location is the centrosome. The protein resides in the lysosome membrane. Component of the BLOC-1 complex, a complex that is required for normal biogenesis of lysosome-related organelles (LRO), such as platelet dense granules and melanosomes. In concert with the AP-3 complex, the BLOC-1 complex is required to target membrane protein cargos into vesicles assembled at cell bodies for delivery into neurites and nerve terminals. The BLOC-1 complex, in association with SNARE proteins, is also proposed to be involved in neurite extension. As part of the BORC complex may play a role in lysosomes movement and localization at the cell periphery. Associated with the cytosolic face of lysosomes, the BORC complex may recruit ARL8B and couple lysosomes to microtubule plus-end-directed kinesin motor. May play a role in cell proliferation. The chain is Biogenesis of lysosome-related organelles complex 1 subunit 2 (BLOC1S2) from Homo sapiens (Human).